The following is a 308-amino-acid chain: Glycine--tRNA ligase alpha subunit (308 aa).

Belongs to the class-II aminoacyl-tRNA synthetase family. In terms of assembly, tetramer of two alpha and two beta subunits.

The protein localises to the cytoplasm. It catalyses the reaction tRNA(Gly) + glycine + ATP = glycyl-tRNA(Gly) + AMP + diphosphate. This is Glycine--tRNA ligase alpha subunit from Streptococcus pyogenes serotype M3 (strain SSI-1).